The sequence spans 314 residues: Solute carrier family 25 member 44 (314 aa).

3 Solcar repeats span residues 18 to 100, 107 to 210, and 220 to 302; these read KKFY…TRKF, SNTV…YAEQ, and PHIV…LKKL. 6 consecutive transmembrane segments (helical) span residues 20-42, 71-90, 113-133, 185-201, 222-239, and 278-296; these read FYVF…TLIR, AGLY…GQCY, LVAG…IDVV, GYVA…AVWW, IVFQ…ASIL, and LSAR…VVGY.

Belongs to the mitochondrial carrier (TC 2.A.29) family. As to expression, highly expressed in brown adipose tissues compared with other metabolic organs.

It localises to the mitochondrion membrane. The enzyme catalyses L-valine(in) = L-valine(out). It catalyses the reaction L-leucine(in) = L-leucine(out). Its function is as follows. Mitochondrial solute transporter which transports branched-chain amino acid (BCAA; valine, leucine and isoleucine) into mitochondria in brown adipose tissue (BAT). BAT is involved in BCAA catabolism and actively utilizes BCAA in the mitochondria for thermogenesis. The sequence is that of Solute carrier family 25 member 44 from Mus musculus (Mouse).